Consider the following 173-residue polypeptide: MTRILGIDPGSQRTGVGIIDVDATGRVSHVHHQPLVLLGADDFPQRMKLLVLGLADLCREYEPQEVAIERVFMARNPDSALKLGQARGAAISAVVLRDLPVHEYAASEIKLAVVGRGGAEKQQVQHMVGLMLNLKTKLQADAADALAVAITHAHVRATANRLGLSARQAWGRK.

Residues aspartate 8, glutamate 69, and aspartate 141 contribute to the active site. Mg(2+)-binding residues include aspartate 8, glutamate 69, and aspartate 141.

The protein belongs to the RuvC family. As to quaternary structure, homodimer which binds Holliday junction (HJ) DNA. The HJ becomes 2-fold symmetrical on binding to RuvC with unstacked arms; it has a different conformation from HJ DNA in complex with RuvA. In the full resolvosome a probable DNA-RuvA(4)-RuvB(12)-RuvC(2) complex forms which resolves the HJ. Requires Mg(2+) as cofactor.

It is found in the cytoplasm. The catalysed reaction is Endonucleolytic cleavage at a junction such as a reciprocal single-stranded crossover between two homologous DNA duplexes (Holliday junction).. Functionally, the RuvA-RuvB-RuvC complex processes Holliday junction (HJ) DNA during genetic recombination and DNA repair. Endonuclease that resolves HJ intermediates. Cleaves cruciform DNA by making single-stranded nicks across the HJ at symmetrical positions within the homologous arms, yielding a 5'-phosphate and a 3'-hydroxyl group; requires a central core of homology in the junction. The consensus cleavage sequence is 5'-(A/T)TT(C/G)-3'. Cleavage occurs on the 3'-side of the TT dinucleotide at the point of strand exchange. HJ branch migration catalyzed by RuvA-RuvB allows RuvC to scan DNA until it finds its consensus sequence, where it cleaves and resolves the cruciform DNA. This is Crossover junction endodeoxyribonuclease RuvC from Stenotrophomonas maltophilia (strain R551-3).